A 62-amino-acid chain; its full sequence is Large ribosomal subunit protein bL28 (62 aa).

The tract at residues 1 to 22 (MGKQCFVTGRKASTGNRRSHAL) is disordered.

Belongs to the bacterial ribosomal protein bL28 family.

In Staphylococcus aureus (strain N315), this protein is Large ribosomal subunit protein bL28.